The sequence spans 545 residues: CTP synthase (545 aa).

The interval 1–266 is amidoligase domain; the sequence is MTHFIFVTGG…DDLICERFGF (266 aa). Residue serine 13 participates in CTP binding. Serine 13 is a binding site for UTP. ATP is bound by residues 14-19 and aspartate 71; that span reads SLGKGI. Residues aspartate 71 and glutamate 140 each coordinate Mg(2+). Residues 147 to 149, 187 to 192, and lysine 223 contribute to the CTP site; these read DIE and KTKPTQ. UTP is bound by residues 187-192 and lysine 223; that span reads KTKPTQ. 239–241 provides a ligand contact to ATP; it reads KDA. One can recognise a Glutamine amidotransferase type-1 domain in the interval 292–543; sequence RVAMVGKYVE…IDAAKTQHQK (252 aa). Glycine 353 contributes to the L-glutamine binding site. Cysteine 380 acts as the Nucleophile; for glutamine hydrolysis in catalysis. L-glutamine is bound by residues 381–384, glutamate 404, and arginine 471; that span reads LGMQ. Catalysis depends on residues histidine 516 and glutamate 518.

The protein belongs to the CTP synthase family. In terms of assembly, homotetramer.

The catalysed reaction is UTP + L-glutamine + ATP + H2O = CTP + L-glutamate + ADP + phosphate + 2 H(+). It catalyses the reaction L-glutamine + H2O = L-glutamate + NH4(+). The enzyme catalyses UTP + NH4(+) + ATP = CTP + ADP + phosphate + 2 H(+). It functions in the pathway pyrimidine metabolism; CTP biosynthesis via de novo pathway; CTP from UDP: step 2/2. Allosterically activated by GTP, when glutamine is the substrate; GTP has no effect on the reaction when ammonia is the substrate. The allosteric effector GTP functions by stabilizing the protein conformation that binds the tetrahedral intermediate(s) formed during glutamine hydrolysis. Inhibited by the product CTP, via allosteric rather than competitive inhibition. In terms of biological role, catalyzes the ATP-dependent amination of UTP to CTP with either L-glutamine or ammonia as the source of nitrogen. Regulates intracellular CTP levels through interactions with the four ribonucleotide triphosphates. The chain is CTP synthase from Acinetobacter baumannii (strain AB307-0294).